A 274-amino-acid chain; its full sequence is Dermonecrotic toxin SdSicTox-betaIIB1biii (274 aa).

Residue His-5 is part of the active site. 2 residues coordinate Mg(2+): Glu-25 and Asp-27. His-41 (nucleophile) is an active-site residue. 2 cysteine pairs are disulfide-bonded: Cys-45-Cys-51 and Cys-47-Cys-190. Asp-85 lines the Mg(2+) pocket.

This sequence belongs to the arthropod phospholipase D family. Class II subfamily. Mg(2+) serves as cofactor. As to expression, expressed by the venom gland.

It localises to the secreted. The catalysed reaction is an N-(acyl)-sphingosylphosphocholine = an N-(acyl)-sphingosyl-1,3-cyclic phosphate + choline. It catalyses the reaction an N-(acyl)-sphingosylphosphoethanolamine = an N-(acyl)-sphingosyl-1,3-cyclic phosphate + ethanolamine. The enzyme catalyses a 1-acyl-sn-glycero-3-phosphocholine = a 1-acyl-sn-glycero-2,3-cyclic phosphate + choline. It carries out the reaction a 1-acyl-sn-glycero-3-phosphoethanolamine = a 1-acyl-sn-glycero-2,3-cyclic phosphate + ethanolamine. Dermonecrotic toxins cleave the phosphodiester linkage between the phosphate and headgroup of certain phospholipids (sphingolipid and lysolipid substrates), forming an alcohol (often choline) and a cyclic phosphate. This toxin acts on sphingomyelin (SM). It may also act on ceramide phosphoethanolamine (CPE), lysophosphatidylcholine (LPC) and lysophosphatidylethanolamine (LPE), but not on lysophosphatidylserine (LPS), and lysophosphatidylglycerol (LPG). It acts by transphosphatidylation, releasing exclusively cyclic phosphate products as second products. Induces dermonecrosis, hemolysis, increased vascular permeability, edema, inflammatory response, and platelet aggregation. The sequence is that of Dermonecrotic toxin SdSicTox-betaIIB1biii from Sicarius cf. damarensis (strain GJB-2008) (Six-eyed sand spider).